Here is a 117-residue protein sequence, read N- to C-terminus: MAKTSSTTKDAQDLFHAIWSAYSATPTNLKIIDLYVVFAVFTALLQDVYMALVGPFPFNSFLSGVLSCVGTAVLAVCLRIQVNKENKEFKDLGPERAFADFVLCNLVLHLVIMNFLG.

Residues 1-33 (MAKTSSTTKDAQDLFHAIWSAYSATPTNLKIID) lie on the Cytoplasmic side of the membrane. Residues 34–54 (LYVVFAVFTALLQDVYMALVG) form a helical membrane-spanning segment. The Lumenal segment spans residues 55-57 (PFP). A helical membrane pass occupies residues 58–78 (FNSFLSGVLSCVGTAVLAVCL). The Cytoplasmic segment spans residues 79–96 (RIQVNKENKEFKDLGPER). The chain crosses the membrane as a helical span at residues 97–117 (AFADFVLCNLVLHLVIMNFLG).

The protein belongs to the DAD/OST2 family. Component of the oligosaccharyltransferase (OST) complex.

The protein localises to the endoplasmic reticulum membrane. It functions in the pathway protein modification; protein glycosylation. Subunit of the oligosaccharyl transferase (OST) complex that catalyzes the initial transfer of a defined glycan (Glc(3)Man(9)GlcNAc(2) in eukaryotes) from the lipid carrier dolichol-pyrophosphate to an asparagine residue within an Asn-X-Ser/Thr consensus motif in nascent polypeptide chains, the first step in protein N-glycosylation. N-glycosylation occurs cotranslationally and the complex associates with the Sec61 complex at the channel-forming translocon complex that mediates protein translocation across the endoplasmic reticulum (ER). All subunits are required for a maximal enzyme activity. The chain is Dolichyl-diphosphooligosaccharide--protein glycosyltransferase subunit DAD1 (DAD1) from Pisum sativum (Garden pea).